A 49-amino-acid polypeptide reads, in one-letter code: DNA-directed RNA polymerase subunit Rpo12 (49 aa).

Residues C11, C27, and C30 each coordinate Zn(2+).

Belongs to the archaeal Rpo12/eukaryotic RPC10 RNA polymerase subunit family. In terms of assembly, part of the RNA polymerase complex. Zn(2+) is required as a cofactor.

The protein localises to the cytoplasm. The enzyme catalyses RNA(n) + a ribonucleoside 5'-triphosphate = RNA(n+1) + diphosphate. DNA-dependent RNA polymerase (RNAP) catalyzes the transcription of DNA into RNA using the four ribonucleoside triphosphates as substrates. The polypeptide is DNA-directed RNA polymerase subunit Rpo12 (Pyrococcus abyssi (strain GE5 / Orsay)).